The sequence spans 170 residues: Small ribosomal subunit protein uS9 (170 aa).

Residues 1–47 (MAETTPEQPLEEIDIDSYTTESEVPVEGEYTSESMASAFGEPQPAAG) are disordered.

The protein belongs to the universal ribosomal protein uS9 family.

The polypeptide is Small ribosomal subunit protein uS9 (rpsI) (Streptomyces coelicolor (strain ATCC BAA-471 / A3(2) / M145)).